We begin with the raw amino-acid sequence, 819 residues long: Leucine--tRNA ligase (819 aa).

The short motif at 40 to 51 (PYPSGAGLHVGH) is the 'HIGH' region element. The short motif at 600–604 (KMSKS) is the 'KMSKS' region element. ATP is bound at residue Lys603.

The protein belongs to the class-I aminoacyl-tRNA synthetase family.

Its subcellular location is the cytoplasm. The enzyme catalyses tRNA(Leu) + L-leucine + ATP = L-leucyl-tRNA(Leu) + AMP + diphosphate. The polypeptide is Leucine--tRNA ligase (Chlamydia trachomatis serovar D (strain ATCC VR-885 / DSM 19411 / UW-3/Cx)).